Consider the following 172-residue polypeptide: uncharacterized protein (172 aa).

The next 3 membrane-spanning stretches (helical) occupy residues 44–68 (VLVS…AALT), 86–110 (LASY…VFSL), and 117–135 (VVFI…VTLF).

It belongs to the chlamydial CPn_0442/CT_006/TC_0274 family.

The protein resides in the cell membrane. This is an uncharacterized protein from Chlamydia pneumoniae (Chlamydophila pneumoniae).